A 232-amino-acid polypeptide reads, in one-letter code: Ribonuclease 3 (232 aa).

Residues 7–136 (AALLEDTIDY…LLGAVFCDGG (130 aa)) enclose the RNase III domain. Glu-49 is a binding site for Mg(2+). The active site involves Asp-53. Mg(2+)-binding residues include Asn-122 and Glu-125. Glu-125 is an active-site residue. In terms of domain architecture, DRBM spans 163–232 (DYKTRLQERL…AKQALEYLEE (70 aa)).

The protein belongs to the ribonuclease III family. In terms of assembly, homodimer. The cofactor is Mg(2+).

It is found in the cytoplasm. The catalysed reaction is Endonucleolytic cleavage to 5'-phosphomonoester.. Digests double-stranded RNA. Involved in the processing of primary rRNA transcript to yield the immediate precursors to the large and small rRNAs (23S and 16S). Processes some mRNAs, and tRNAs when they are encoded in the rRNA operon. Processes pre-crRNA and tracrRNA of type II CRISPR loci if present in the organism. This Syntrophotalea carbinolica (strain DSM 2380 / NBRC 103641 / GraBd1) (Pelobacter carbinolicus) protein is Ribonuclease 3.